Here is a 257-residue protein sequence, read N- to C-terminus: uncharacterized protein (257 aa).

NAD(+)-binding residues include aspartate 34, aspartate 60, valine 61, asparagine 87, tyrosine 152, and lysine 156. The active-site Proton acceptor is tyrosine 152.

This sequence belongs to the short-chain dehydrogenases/reductases (SDR) family.

This is an uncharacterized protein from Bacillus subtilis (strain 168).